The following is a 314-amino-acid chain: 4-hydroxy-3-methylbut-2-enyl diphosphate reductase (314 aa).

C12 contributes to the [4Fe-4S] cluster binding site. (2E)-4-hydroxy-3-methylbut-2-enyl diphosphate-binding residues include H41 and H74. Residues H41 and H74 each coordinate dimethylallyl diphosphate. Positions 41 and 74 each coordinate isopentenyl diphosphate. C96 provides a ligand contact to [4Fe-4S] cluster. H124 contacts (2E)-4-hydroxy-3-methylbut-2-enyl diphosphate. H124 contributes to the dimethylallyl diphosphate binding site. An isopentenyl diphosphate-binding site is contributed by H124. The active-site Proton donor is the E126. T167 contacts (2E)-4-hydroxy-3-methylbut-2-enyl diphosphate. [4Fe-4S] cluster is bound at residue C197. S225, S226, N227, and S269 together coordinate (2E)-4-hydroxy-3-methylbut-2-enyl diphosphate. Residues S225, S226, N227, and S269 each contribute to the dimethylallyl diphosphate site. 4 residues coordinate isopentenyl diphosphate: S225, S226, N227, and S269.

It belongs to the IspH family. Requires [4Fe-4S] cluster as cofactor.

It catalyses the reaction isopentenyl diphosphate + 2 oxidized [2Fe-2S]-[ferredoxin] + H2O = (2E)-4-hydroxy-3-methylbut-2-enyl diphosphate + 2 reduced [2Fe-2S]-[ferredoxin] + 2 H(+). The catalysed reaction is dimethylallyl diphosphate + 2 oxidized [2Fe-2S]-[ferredoxin] + H2O = (2E)-4-hydroxy-3-methylbut-2-enyl diphosphate + 2 reduced [2Fe-2S]-[ferredoxin] + 2 H(+). Its pathway is isoprenoid biosynthesis; dimethylallyl diphosphate biosynthesis; dimethylallyl diphosphate from (2E)-4-hydroxy-3-methylbutenyl diphosphate: step 1/1. It functions in the pathway isoprenoid biosynthesis; isopentenyl diphosphate biosynthesis via DXP pathway; isopentenyl diphosphate from 1-deoxy-D-xylulose 5-phosphate: step 6/6. Its function is as follows. Catalyzes the conversion of 1-hydroxy-2-methyl-2-(E)-butenyl 4-diphosphate (HMBPP) into a mixture of isopentenyl diphosphate (IPP) and dimethylallyl diphosphate (DMAPP). Acts in the terminal step of the DOXP/MEP pathway for isoprenoid precursor biosynthesis. This is 4-hydroxy-3-methylbut-2-enyl diphosphate reductase from Glaesserella parasuis serovar 5 (strain SH0165) (Haemophilus parasuis).